Here is a 225-residue protein sequence, read N- to C-terminus: Proteoglycan 3 (225 aa).

The first 17 residues, 1-17 (MQCLLLLPFLLLGTVSA), serve as a signal peptide directing secretion. Positions 107 to 224 (CKICRYLLVR…CDKQLPFVCS (118 aa)) constitute a C-type lectin domain. 2 cysteine pairs are disulfide-bonded: Cys-128/Cys-223 and Cys-200/Cys-215.

As to expression, expressed in bone marrow. Not detected in placenta.

It localises to the cytoplasmic granule. Its function is as follows. Possesses similar cytotoxic and cytostimulatory activities to PRG2/MBP. In vitro, stimulates neutrophil superoxide production and IL8 release, and histamine and leukotriene C4 release from basophils. In Homo sapiens (Human), this protein is Proteoglycan 3.